The chain runs to 688 residues: Pentatricopeptide repeat-containing protein At3g18020 (688 aa).

17 PPR repeats span residues 53 to 88, 89 to 123, 124 to 158, 161 to 195, 196 to 230, 231 to 261, 271 to 305, 306 to 340, 341 to 375, 376 to 406, 411 to 445, 446 to 480, 482 to 517, 518 to 552, 553 to 583, 588 to 622, and 623 to 657; these read DRAY…GYRP, DSLN…GFIP, DERT…KKEF, SLTN…GHLP, DVVT…GIRP, NSLT…LWEY, KAAA…ESVN, VEFA…GLKP, RRTS…EFFP, SEYT…MLRK, RTRI…DCRP, DEYT…KFCA, DAVT…KIKP, GVVA…SVTA, DSTT…VIWP, DAFV…GAIP, and NVVC…GQAP.

This sequence belongs to the PPR family. P subfamily.

The protein is Pentatricopeptide repeat-containing protein At3g18020 of Arabidopsis thaliana (Mouse-ear cress).